A 363-amino-acid polypeptide reads, in one-letter code: NAD(P)H-quinone oxidoreductase subunit 1, chloroplastic (363 aa).

Transmembrane regions (helical) follow at residues 30 to 50 (FLPI…IVWL), 104 to 124 (IAVI…HLVL), 129 to 149 (IGVF…LMSG), 248 to 268 (YSGI…LVSS), 300 to 320 (VFGT…FLFI), and 343 to 363 (FLLP…LLSL).

It belongs to the complex I subunit 1 family. NDH is composed of at least 16 different subunits, 5 of which are encoded in the nucleus.

It localises to the plastid. Its subcellular location is the chloroplast thylakoid membrane. It carries out the reaction a plastoquinone + NADH + (n+1) H(+)(in) = a plastoquinol + NAD(+) + n H(+)(out). The enzyme catalyses a plastoquinone + NADPH + (n+1) H(+)(in) = a plastoquinol + NADP(+) + n H(+)(out). NDH shuttles electrons from NAD(P)H:plastoquinone, via FMN and iron-sulfur (Fe-S) centers, to quinones in the photosynthetic chain and possibly in a chloroplast respiratory chain. The immediate electron acceptor for the enzyme in this species is believed to be plastoquinone. Couples the redox reaction to proton translocation, and thus conserves the redox energy in a proton gradient. The polypeptide is NAD(P)H-quinone oxidoreductase subunit 1, chloroplastic (Eucalyptus globulus subsp. globulus (Tasmanian blue gum)).